The chain runs to 644 residues: Zinc transporter ZIP4 (644 aa).

A signal peptide spans 1-27 (MAILAWLEPRPLLAVLVLVLTMRMAQP). The Extracellular portion of the chain corresponds to 28 to 323 (AHLLTLLSSG…QNQLSQAEKY (296 aa)). 3 cysteine pairs are disulfide-bonded: Cys-59–Cys-64, Cys-67–Cys-103, and Cys-153–Cys-188. The interval 231–259 (TETHSDHHHQEKRVNRQGPTPLTAPNSSS) is disordered. A compositionally biased stretch (basic and acidic residues) spans 233–244 (THSDHHHQEKRV). Residues 247 to 259 (QGPTPLTAPNSSS) are compositionally biased toward polar residues. The cysteines at positions 266 and 305 are disulfide-linked. A helical transmembrane segment spans residues 324-344 (LYGSLATLLICLCSTFGLLLL). Topologically, residues 345–355 (TCAACSTAAHY) are cytoplasmic. A helical transmembrane segment spans residues 356–376 (VIQTFLGMAVGALTGDALLHL). Residues 377 to 404 (TPKVLGLHQHGGDSEHRADSHGPQTTWR) are Extracellular-facing. The helical transmembrane segment at 405-425 (LVVALSGLYVFFLFEKLCDLL) threads the bilayer. Residues 426–495 (LPQDPEDRKG…KSPELRLLPY (70 aa)) are Cytoplasmic-facing. An Essential for SLC39A4 endocytosis motif is present at residues 449 to 451 (LQL). Residues 456 to 467 (LRPPKQPHEGSR) are compositionally biased toward basic and acidic residues. The segment at 456-484 (LRPPKQPHEGSRADLVAEESPELLSPEPR) is disordered. Residues 496–515 (MITLGDGLHNFADGLAVGAA) form a helical membrane-spanning segment. Zn(2+)-binding residues include His-504, Asn-505, and Asp-508. At 516 to 523 (FASSWKTG) the chain is on the extracellular side. Residues 524–550 (LATSLAVFCHEVPHELGDFAALLHAGL) form a helical membrane-spanning segment. Residues His-533, Glu-534, and His-537 each contribute to the Zn(2+) site. Residues 551 to 555 (PVSRA) lie on the Cytoplasmic side of the membrane. Residues 556-576 (LLLNLASGLTAFAGLYVALAL) form a helical membrane-spanning segment. The Extracellular segment spans residues 577–583 (GVGEESE). A helical membrane pass occupies residues 584–604 (SWTLAVAIGLFLYVALCDMLP). The Cytoplasmic portion of the chain corresponds to 605–614 (AMLNVRDPRP). The helical transmembrane segment at 615–635 (WLLFLLHNVGLLGGWAVLLLL) threads the bilayer. At 636 to 644 (SLYEDSIAL) the chain is on the extracellular side.

It belongs to the ZIP transporter (TC 2.A.5) family. As to quaternary structure, homodimer. Post-translationally, the extracellular N-terminal ectodomain is cleaved when cells are Zn(2+) deficient, N-terminally cleaved SLC39A4 is internalized at a faster rate. In terms of processing, under excess Zn(2+) conditions, SLC39A4 on the cell surface is rapidly endocytosed, ubiquitinated and degraded. Glycosylated.

The protein localises to the cell membrane. It localises to the recycling endosome membrane. Its subcellular location is the apical cell membrane. It catalyses the reaction Zn(2+)(in) = Zn(2+)(out). Its function is as follows. Selective transporter that mediates the uptake of Zn(2+). Plays an essential role for dietary zinc uptake from small intestine. The Zn(2+) uniporter activity is regulated by zinc availability. Also exhibits polyspecific binding and transport of Cu(2+), Cd(2+) and possibly Ni(2+) but at higher concentrations. This is Zinc transporter ZIP4 from Pteropus alecto (Black flying fox).